Here is a 126-residue protein sequence, read N- to C-terminus: MDNQLEIELNPTEILKKEFKSKMRGYDPEEVDGYLDLVIKDYQTYQENIDRLTADNTRLFNKVEELNRQLSASDSVKEVKPQQASAATNYDILKRLSNLERHVFGAKLSDQNGAAQTRVQNHSQFD.

The stretch at 35 to 72 forms a coiled coil; it reads LDLVIKDYQTYQENIDRLTADNTRLFNKVEELNRQLSA.

It belongs to the GpsB family. As to quaternary structure, forms polymers through the coiled coil domains. Interacts with PBP1, MreC and EzrA.

Its subcellular location is the cytoplasm. Divisome component that associates with the complex late in its assembly, after the Z-ring is formed, and is dependent on DivIC and PBP2B for its recruitment to the divisome. Together with EzrA, is a key component of the system that regulates PBP1 localization during cell cycle progression. Its main role could be the removal of PBP1 from the cell pole after pole maturation is completed. Also contributes to the recruitment of PBP1 to the division complex. Not essential for septum formation. This Latilactobacillus sakei subsp. sakei (strain 23K) (Lactobacillus sakei subsp. sakei) protein is Cell cycle protein GpsB.